The primary structure comprises 333 residues: Fe-S cluster assembly protein dre2 (333 aa).

The segment at 1–29 (MSPITLDLTSDFNPANTTGAGSSSSQPRT) is disordered. Over residues 7–28 (DLTSDFNPANTTGAGSSSSQPR) the composition is skewed to polar residues. The tract at residues 23–158 (SSSQPRTLLV…KPDYAEEEAV (136 aa)) is N-terminal SAM-like domain. Residues 159–225 (PLRFGLKRKT…EDTLLTEADL (67 aa)) are linker. The [2Fe-2S] cluster site is built by Cys-235, Cys-246, Cys-249, and Cys-251. The tract at residues 235 to 251 (CQPKPGKKRRACKDCTC) is fe-S binding site A. [4Fe-4S] cluster-binding residues include Cys-296, Cys-299, Cys-307, and Cys-310. Short sequence motifs (cx2C motif) lie at residues 296–299 (CGSC) and 307–310 (CAGC). The segment at 296-310 (CGSCALGDAFRCAGC) is fe-S binding site B.

It belongs to the anamorsin family. In terms of assembly, monomer. Interacts with tah18. Interacts with mia40. [2Fe-2S] cluster is required as a cofactor. The cofactor is [4Fe-4S] cluster.

It is found in the cytoplasm. Its subcellular location is the mitochondrion intermembrane space. Its function is as follows. Component of the cytosolic iron-sulfur (Fe-S) protein assembly (CIA) machinery required for the maturation of extramitochondrial Fe-S proteins. Part of an electron transfer chain functioning in an early step of cytosolic Fe-S biogenesis, facilitating the de novo assembly of a [4Fe-4S] cluster on the scaffold complex cfd1-nbp35. Electrons are transferred to dre2 from NADPH via the FAD- and FMN-containing protein tah18. Tah18-dre2 are also required for the assembly of the diferric tyrosyl radical cofactor of ribonucleotide reductase (RNR), probably by providing electrons for reduction during radical cofactor maturation in the catalytic small subunit rnr2. The sequence is that of Fe-S cluster assembly protein dre2 from Neurospora crassa (strain ATCC 24698 / 74-OR23-1A / CBS 708.71 / DSM 1257 / FGSC 987).